Consider the following 150-residue polypeptide: MSEHAVSIDVREIMRCLPHRYPFLLVDRVTEMEPNVRIKALKNVTINEPFFVGHFEQYPVMPGVLIIEALAQAAGILAIKSQGERLENELYFFVGIDNARFKRQVVPGDQLVFEVTQMTVKRGIGKYAARALVDGQVACEAEIMCARREV.

The active site involves H54.

This sequence belongs to the thioester dehydratase family. FabZ subfamily.

It localises to the cytoplasm. The enzyme catalyses a (3R)-hydroxyacyl-[ACP] = a (2E)-enoyl-[ACP] + H2O. Involved in unsaturated fatty acids biosynthesis. Catalyzes the dehydration of short chain beta-hydroxyacyl-ACPs and long chain saturated and unsaturated beta-hydroxyacyl-ACPs. The polypeptide is 3-hydroxyacyl-[acyl-carrier-protein] dehydratase FabZ (Chromobacterium violaceum (strain ATCC 12472 / DSM 30191 / JCM 1249 / CCUG 213 / NBRC 12614 / NCIMB 9131 / NCTC 9757 / MK)).